The following is an 882-amino-acid chain: Translation initiation factor IF-2 (882 aa).

3 stretches are compositionally biased toward polar residues: residues 38–56 (NDSN…AEYS), 97–124 (GGYS…YSQN), and 140–192 (GGYS…NRDS). Disordered regions lie at residues 38–192 (NDSN…NRDS) and 236–274 (STPA…AETE). Basic and acidic residues predominate over residues 243–259 (ENSKELNRKLGEKKKQQ). A tr-type G domain is found at 380-553 (EKPPVITIMG…DMMLLKANPS (174 aa)). The G1 stretch occupies residues 389 to 396 (GHVDHGKT). Residue 389-396 (GHVDHGKT) participates in GTP binding. The interval 414-418 (GITQH) is G2. Residues 435 to 438 (DTPG) are G3. GTP-binding positions include 435 to 439 (DTPGH) and 489 to 492 (NKID). A G4 region spans residues 489–492 (NKID). Positions 525–527 (SAL) are G5.

Belongs to the TRAFAC class translation factor GTPase superfamily. Classic translation factor GTPase family. IF-2 subfamily.

The protein resides in the cytoplasm. Its function is as follows. One of the essential components for the initiation of protein synthesis. Protects formylmethionyl-tRNA from spontaneous hydrolysis and promotes its binding to the 30S ribosomal subunits. Also involved in the hydrolysis of GTP during the formation of the 70S ribosomal complex. The chain is Translation initiation factor IF-2 (infB) from Borreliella burgdorferi (strain ATCC 35210 / DSM 4680 / CIP 102532 / B31) (Borrelia burgdorferi).